We begin with the raw amino-acid sequence, 255 residues long: Diphthine synthase (255 aa).

S-adenosyl-L-methionine-binding positions include L9, D85, V88, 113 to 114 (SI), L164, A207, and H232.

It belongs to the diphthine synthase family. As to quaternary structure, homodimer.

The enzyme catalyses 2-[(3S)-amino-3-carboxypropyl]-L-histidyl-[translation elongation factor 2] + 3 S-adenosyl-L-methionine = diphthine-[translation elongation factor 2] + 3 S-adenosyl-L-homocysteine + 3 H(+). The protein operates within protein modification; peptidyl-diphthamide biosynthesis. In terms of biological role, S-adenosyl-L-methionine-dependent methyltransferase that catalyzes the trimethylation of the amino group of the modified target histidine residue in translation elongation factor 2 (EF-2), to form an intermediate called diphthine. The three successive methylation reactions represent the second step of diphthamide biosynthesis. The protein is Diphthine synthase of Methanococcus maripaludis (strain C5 / ATCC BAA-1333).